Consider the following 568-residue polypeptide: Malate synthase, glyoxysomal (568 aa).

The disordered stretch occupies residues 1 to 20 (MGSLGMYSESGLTKKGSSRG). The Proton acceptor role is filled by arginine 183. Aspartate 469 acts as the Proton donor in catalysis. Residues 566 to 568 (SKL) carry the Microbody targeting signal motif.

Belongs to the malate synthase family.

Its subcellular location is the glyoxysome. The enzyme catalyses glyoxylate + acetyl-CoA + H2O = (S)-malate + CoA + H(+). Its pathway is carbohydrate metabolism; glyoxylate cycle; (S)-malate from isocitrate: step 2/2. The chain is Malate synthase, glyoxysomal from Cucumis sativus (Cucumber).